A 145-amino-acid polypeptide reads, in one-letter code: MTSRALLLLASALLGTPGLTFSGLNPESYDLATAHLSDGEQFCQGLTQEDLQGDLLTERERQGIACWSCRKILQKLEDLVGEQPNEATINEAASRVCRNLGLLRGACKKIMRTCLRLISRDILAGKKPQEVCVDIKLCKHKAGLI.

Residues 1–22 (MTSRALLLLASALLGTPGLTFS) form the signal peptide. A propeptide spanning residues 23–62 (GLNPESYDLATAHLSDGEQFCQGLTQEDLQGDLLTERERQ) is cleaved from the precursor. The region spanning 62–142 (QGIACWSCRK…VDIKLCKHKA (81 aa)) is the Saposin B-type domain. Cystine bridges form between C66-C138, C69-C132, and C97-C107. Residues 141-145 (KAGLI) constitute a propeptide that is removed on maturation.

It is found in the secreted. In terms of biological role, may be an effector molecule of cytotoxic activity. Has antimicrobial activity. This is Antimicrobial peptide NK-lysin (NKL) from Equus caballus (Horse).